The following is a 270-amino-acid chain: F420 non-reducing hydrogenase II cytochrome subunit (270 aa).

A run of 5 helical transmembrane segments spans residues 27-47 (AIAM…WEFM), 57-77 (MIAV…NIFS), 139-159 (ILIP…IVLY), 173-193 (WIIS…VGFL), and 195-215 (VLHL…VGIL).

Belongs to the HupC/HyaC/HydC family. In terms of assembly, composed of a large subunit (VhtA), a small subunit (VhtG) and a cytochrome subunit (VhtC). It depends on heme b as a cofactor.

It localises to the cell membrane. The catalysed reaction is methanophenazine + H2 = dihydromethanophenazine. In terms of biological role, part of the F420 non-reducing hydrogenase II complex that catalyzes the reduction of methanophenazine to dihydromethanophenazine. This Methanosarcina mazei (strain ATCC BAA-159 / DSM 3647 / Goe1 / Go1 / JCM 11833 / OCM 88) (Methanosarcina frisia) protein is F420 non-reducing hydrogenase II cytochrome subunit.